The primary structure comprises 180 residues: Shikimate kinase (180 aa).

Residue 14–19 participates in ATP binding; it reads GAGKSC. Serine 18 is a binding site for Mg(2+). Substrate is bound by residues aspartate 36, arginine 60, and glycine 82. Arginine 120 serves as a coordination point for ATP. Residue arginine 139 participates in substrate binding.

It belongs to the shikimate kinase family. Monomer. Requires Mg(2+) as cofactor.

The protein localises to the cytoplasm. It catalyses the reaction shikimate + ATP = 3-phosphoshikimate + ADP + H(+). Its pathway is metabolic intermediate biosynthesis; chorismate biosynthesis; chorismate from D-erythrose 4-phosphate and phosphoenolpyruvate: step 5/7. In terms of biological role, catalyzes the specific phosphorylation of the 3-hydroxyl group of shikimic acid using ATP as a cosubstrate. The chain is Shikimate kinase from Xanthomonas axonopodis pv. citri (strain 306).